Here is a 596-residue protein sequence, read N- to C-terminus: Elongation factor 4 (596 aa).

The 183-residue stretch at 2–184 (KHIRNFSIIA…EIVAKIPPPV (183 aa)) folds into the tr-type G domain. GTP contacts are provided by residues 14-19 (DHGKST) and 131-134 (NKID).

It belongs to the TRAFAC class translation factor GTPase superfamily. Classic translation factor GTPase family. LepA subfamily.

It is found in the cell inner membrane. The enzyme catalyses GTP + H2O = GDP + phosphate + H(+). In terms of biological role, required for accurate and efficient protein synthesis under certain stress conditions. May act as a fidelity factor of the translation reaction, by catalyzing a one-codon backward translocation of tRNAs on improperly translocated ribosomes. Back-translocation proceeds from a post-translocation (POST) complex to a pre-translocation (PRE) complex, thus giving elongation factor G a second chance to translocate the tRNAs correctly. Binds to ribosomes in a GTP-dependent manner. The protein is Elongation factor 4 of Shewanella denitrificans (strain OS217 / ATCC BAA-1090 / DSM 15013).